A 65-amino-acid polypeptide reads, in one-letter code: Ovary maturating parsin (65 aa).

The span at 17–28 (PAAPAVAPAAPA) shows a compositional bias: low complexity. Residues 17–36 (PAAPAVAPAAPASWPHQQRR) form a disordered region.

In terms of assembly, monomer.

Functionally, neurohormone that anticipates ovarian maturation. Acts as a true gonadotropin and stimulates vitellogenin biosynthesis. This Locusta migratoria (Migratory locust) protein is Ovary maturating parsin.